The sequence spans 130 residues: Small ribosomal subunit protein uS8 (130 aa).

It belongs to the universal ribosomal protein uS8 family. As to quaternary structure, part of the 30S ribosomal subunit. Contacts proteins S5 and S12.

Its function is as follows. One of the primary rRNA binding proteins, it binds directly to 16S rRNA central domain where it helps coordinate assembly of the platform of the 30S subunit. The protein is Small ribosomal subunit protein uS8 of Klebsiella pneumoniae subsp. pneumoniae (strain ATCC 700721 / MGH 78578).